The following is a 155-amino-acid chain: Small ribosomal subunit protein uS7 (155 aa).

It belongs to the universal ribosomal protein uS7 family. In terms of assembly, part of the 30S ribosomal subunit. Contacts proteins S9 and S11.

One of the primary rRNA binding proteins, it binds directly to 16S rRNA where it nucleates assembly of the head domain of the 30S subunit. Is located at the subunit interface close to the decoding center, probably blocks exit of the E-site tRNA. The polypeptide is Small ribosomal subunit protein uS7 (Thermotoga maritima (strain ATCC 43589 / DSM 3109 / JCM 10099 / NBRC 100826 / MSB8)).